Reading from the N-terminus, the 134-residue chain is MEMLLGTDIIEVDRIKRAIENGGRKFSEKVFTLNEIEYCESRKAGKYQSYAARFAAKEAVSKAFGTGIGKNAAFSEIEILKDSLGKPYVRLSGKAKEFYDSLGTAGISVSLSHCRAYAVAYAVISLGDSFKNKI.

2 residues coordinate Mg(2+): Asp8 and Glu58.

Belongs to the P-Pant transferase superfamily. AcpS family. It depends on Mg(2+) as a cofactor.

It is found in the cytoplasm. It carries out the reaction apo-[ACP] + CoA = holo-[ACP] + adenosine 3',5'-bisphosphate + H(+). Its function is as follows. Transfers the 4'-phosphopantetheine moiety from coenzyme A to a Ser of acyl-carrier-protein. The protein is Holo-[acyl-carrier-protein] synthase of Ruminiclostridium cellulolyticum (strain ATCC 35319 / DSM 5812 / JCM 6584 / H10) (Clostridium cellulolyticum).